The sequence spans 341 residues: Casein kinase I isoform alpha (341 aa).

Residues 16–284 (YKLIRKIGSG…YLRQLFRILF (269 aa)) form the Protein kinase domain. ATP-binding positions include 22–30 (IGSGSFGDI) and K45. The active-site Proton acceptor is D135. Polar residues predominate over residues 306 to 320 (QSQSSGVPGTNTTTQ). The tract at residues 306–341 (QSQSSGVPGTNTTTQGATVPSAGVPAGVAPGGTTPQ) is disordered. Positions 321-341 (GATVPSAGVPAGVAPGGTTPQ) are enriched in low complexity.

Belongs to the protein kinase superfamily. CK1 Ser/Thr protein kinase family. Casein kinase I subfamily.

The enzyme catalyses L-seryl-[protein] + ATP = O-phospho-L-seryl-[protein] + ADP + H(+). It carries out the reaction L-threonyl-[protein] + ATP = O-phospho-L-threonyl-[protein] + ADP + H(+). In Caenorhabditis elegans, this protein is Casein kinase I isoform alpha (kin-19).